Consider the following 138-residue polypeptide: Large ribosomal subunit protein uL16 (138 aa).

Belongs to the universal ribosomal protein uL16 family. As to quaternary structure, part of the 50S ribosomal subunit.

Its function is as follows. Binds 23S rRNA and is also seen to make contacts with the A and possibly P site tRNAs. In Gluconobacter oxydans (strain 621H) (Gluconobacter suboxydans), this protein is Large ribosomal subunit protein uL16.